Reading from the N-terminus, the 203-residue chain is Thymidine kinase (203 aa).

Residues 21–28 and 99–102 contribute to the ATP site; these read GCMFAGKT and DEIQ. E100 (proton acceptor) is an active-site residue. C156, C159, C194, and C197 together coordinate Zn(2+).

This sequence belongs to the thymidine kinase family. Homotetramer.

The protein resides in the cytoplasm. The catalysed reaction is thymidine + ATP = dTMP + ADP + H(+). This is Thymidine kinase from Mesoplasma florum (strain ATCC 33453 / NBRC 100688 / NCTC 11704 / L1) (Acholeplasma florum).